Reading from the N-terminus, the 235-residue chain is Pathogen-related protein (235 aa).

This chain is Pathogen-related protein, found in Hordeum vulgare (Barley).